The following is a 329-amino-acid chain: Malate dehydrogenase (329 aa).

Residue 12 to 18 (GAAGQIG) participates in NAD(+) binding. Residues Arg95 and Arg101 each contribute to the substrate site. NAD(+)-binding positions include Asn108, Gln115, and 132-134 (VGN). Substrate is bound by residues Asn134 and Arg165. His190 (proton acceptor) is an active-site residue.

It belongs to the LDH/MDH superfamily. MDH type 2 family.

The enzyme catalyses (S)-malate + NAD(+) = oxaloacetate + NADH + H(+). Catalyzes the reversible oxidation of malate to oxaloacetate. The polypeptide is Malate dehydrogenase (Janthinobacterium sp. (strain Marseille) (Minibacterium massiliensis)).